The following is a 162-amino-acid chain: 2-C-methyl-D-erythritol 2,4-cyclodiphosphate synthase (162 aa).

A divalent metal cation-binding residues include Asp10 and His12. Residues Asp10–His12 and His36–Ser37 contribute to the 4-CDP-2-C-methyl-D-erythritol 2-phosphate site. His44 contacts a divalent metal cation. Residues Asp58–Gly60, Phe63–Asp67, and Arg144 each bind 4-CDP-2-C-methyl-D-erythritol 2-phosphate.

This sequence belongs to the IspF family. Homotrimer. A divalent metal cation serves as cofactor.

The catalysed reaction is 4-CDP-2-C-methyl-D-erythritol 2-phosphate = 2-C-methyl-D-erythritol 2,4-cyclic diphosphate + CMP. It functions in the pathway isoprenoid biosynthesis; isopentenyl diphosphate biosynthesis via DXP pathway; isopentenyl diphosphate from 1-deoxy-D-xylulose 5-phosphate: step 4/6. Involved in the biosynthesis of isopentenyl diphosphate (IPP) and dimethylallyl diphosphate (DMAPP), two major building blocks of isoprenoid compounds. Catalyzes the conversion of 4-diphosphocytidyl-2-C-methyl-D-erythritol 2-phosphate (CDP-ME2P) to 2-C-methyl-D-erythritol 2,4-cyclodiphosphate (ME-CPP) with a corresponding release of cytidine 5-monophosphate (CMP). This Burkholderia thailandensis (strain ATCC 700388 / DSM 13276 / CCUG 48851 / CIP 106301 / E264) protein is 2-C-methyl-D-erythritol 2,4-cyclodiphosphate synthase.